Here is a 189-residue protein sequence, read N- to C-terminus: GMP synthase [glutamine-hydrolyzing] subunit A (189 aa).

Positions 1 to 189 (MIVILNNGGQ…CKKCGFEFEE (189 aa)) constitute a Glutamine amidotransferase type-1 domain. Catalysis depends on C76, which acts as the Nucleophile. Residues H163 and E165 contribute to the active site.

Heterodimer composed of a glutamine amidotransferase subunit (A) and a GMP-binding subunit (B).

It catalyses the reaction XMP + L-glutamine + ATP + H2O = GMP + L-glutamate + AMP + diphosphate + 2 H(+). The protein operates within purine metabolism; GMP biosynthesis; GMP from XMP (L-Gln route): step 1/1. Catalyzes the synthesis of GMP from XMP. This chain is GMP synthase [glutamine-hydrolyzing] subunit A, found in Methanococcus maripaludis (strain C5 / ATCC BAA-1333).